The sequence spans 293 residues: HTH-type transcriptional regulator HdfR (293 aa).

The region spanning 1-58 (MDTELLKTFLEVSRTRHFGRAAESLYLTQSAVSFRIRQLENQLGANLFTRHRNNIRLT) is the HTH lysR-type domain. Residues 18-37 (FGRAAESLYLTQSAVSFRIR) constitute a DNA-binding region (H-T-H motif).

This sequence belongs to the LysR transcriptional regulatory family.

Functionally, negatively regulates the transcription of the flagellar master operon flhDC by binding to the upstream region of the operon. The protein is HTH-type transcriptional regulator HdfR of Yersinia pseudotuberculosis serotype O:1b (strain IP 31758).